The following is a 333-amino-acid chain: MFRAAAPGQLRRAASLLRFQSTLVIAEHADDSLAPITLNTITAATRLGGEVSCLVAGTKCDKVAQDLCKVAGIAKVLVAQHDVYRGLLPEELTPLILATQKQFNYTHICAGASAFGKNLLPRVAAKLEVAPISDIIAIKSPDTFVRTIYAGNALCTVKCDEKVKVFSVRGTSFEAAATSGGSASSEKASSTSPVEISEWLDQKLTKSDRPELTGAKVVVSGGRGLKSGENFKLLYDLADQRHAAVGASRAAVDAGFVPNDMQVGQTGKIVAPELYIAVGISGAIQHLAGMKDSKTIVAINKDPEAPIFQVADYGIVADLFKVVPEMTEILKKK.

The N-terminal 19 residues, 1 to 19 (MFRAAAPGQLRRAASLLRF), are a transit peptide targeting the mitochondrion. The domain I stretch occupies residues 20-204 (QSTLVIAEHA…EISEWLDQKL (185 aa)). Lysine 59 is modified (N6-acetyllysine; alternate). Lysine 59 carries the N6-succinyllysine; alternate modification. Lysine 62 bears the N6-acetyllysine mark. An N6-acetyllysine; alternate modification is found at lysine 69. Residue lysine 69 is modified to N6-succinyllysine; alternate. N6-acetyllysine is present on lysine 75. Threonine 93 carries the phosphothreonine modification. N6-acetyllysine occurs at positions 101 and 139. Serine 140 is modified (phosphoserine). At lysine 158 the chain carries N6-acetyllysine; alternate. Lysine 158 bears the N6-succinyllysine; alternate mark. Position 164 is an N6-acetyllysine (lysine 164). Lysine 187 carries the post-translational modification N6-succinyllysine. Lysine 203 bears the N6-acetyllysine; alternate mark. Lysine 203 carries the N6-succinyllysine; alternate modification. A domain II region spans residues 205-333 (TKSDRPELTG…PEMTEILKKK (129 aa)). At lysine 216 the chain carries N6-succinyllysine. Arginine 223 contributes to the FAD binding site. N6-acetyllysine; alternate is present on residues lysine 226 and lysine 232. Lysine 226 and lysine 232 each carry N6-succinyllysine; alternate. Residues serine 248, 263–266 (VGQT), 281–286 (SGAIQH), and asparagine 300 each bind FAD. Lysine 301 carries the N6-succinyllysine modification. Residue 318–319 (DL) coordinates FAD.

Belongs to the ETF alpha-subunit/FixB family. In terms of assembly, heterodimer composed of ETFA and ETFB. Identified in a complex that contains ETFA, ETFB and ETFRF1. Interaction with ETFRF1 promotes dissociation of the bound FAD and loss of electron transfer activity. Interacts with TASOR. FAD is required as a cofactor.

Its subcellular location is the mitochondrion matrix. Heterodimeric electron transfer flavoprotein that accepts electrons from several mitochondrial dehydrogenases, including acyl-CoA dehydrogenases, glutaryl-CoA and sarcosine dehydrogenase. It transfers the electrons to the main mitochondrial respiratory chain via ETF-ubiquinone oxidoreductase (ETF dehydrogenase). Required for normal mitochondrial fatty acid oxidation and normal amino acid metabolism. This is Electron transfer flavoprotein subunit alpha, mitochondrial (ETFA) from Pongo abelii (Sumatran orangutan).